Reading from the N-terminus, the 132-residue chain is Small ribosomal subunit protein uS8 (132 aa).

The protein belongs to the universal ribosomal protein uS8 family. In terms of assembly, part of the 30S ribosomal subunit. Contacts proteins S5 and S12.

One of the primary rRNA binding proteins, it binds directly to 16S rRNA central domain where it helps coordinate assembly of the platform of the 30S subunit. This Francisella tularensis subsp. holarctica (strain FTNF002-00 / FTA) protein is Small ribosomal subunit protein uS8.